A 547-amino-acid polypeptide reads, in one-letter code: Chaperonin GroEL (547 aa).

ATP is bound by residues 30-33 (TLGP), K51, 87-91 (DGTTT), G415, and D495.

It belongs to the chaperonin (HSP60) family. Forms a cylinder of 14 subunits composed of two heptameric rings stacked back-to-back. Interacts with the co-chaperonin GroES.

It localises to the cytoplasm. The enzyme catalyses ATP + H2O + a folded polypeptide = ADP + phosphate + an unfolded polypeptide.. Its function is as follows. Together with its co-chaperonin GroES, plays an essential role in assisting protein folding. The GroEL-GroES system forms a nano-cage that allows encapsulation of the non-native substrate proteins and provides a physical environment optimized to promote and accelerate protein folding. The polypeptide is Chaperonin GroEL (Shewanella pealeana (strain ATCC 700345 / ANG-SQ1)).